Reading from the N-terminus, the 317-residue chain is tRNA(Met) cytidine acetate ligase (317 aa).

Residues 6–19 (IAEY…HIYQ), Gly100, Asn157, and Arg182 contribute to the ATP site.

The protein belongs to the TmcAL family.

The protein resides in the cytoplasm. It carries out the reaction cytidine(34) in elongator tRNA(Met) + acetate + ATP = N(4)-acetylcytidine(34) in elongator tRNA(Met) + AMP + diphosphate. Catalyzes the formation of N(4)-acetylcytidine (ac(4)C) at the wobble position of elongator tRNA(Met), using acetate and ATP as substrates. First activates an acetate ion to form acetyladenylate (Ac-AMP) and then transfers the acetyl group to tRNA to form ac(4)C34. In Mesomycoplasma hyopneumoniae (strain J / ATCC 25934 / NCTC 10110) (Mycoplasma hyopneumoniae), this protein is tRNA(Met) cytidine acetate ligase.